A 297-amino-acid polypeptide reads, in one-letter code: Thoeris protein ThsA (297 aa).

The next 2 membrane-spanning stretches (helical) occupy residues 32–52 (ALSIILTIPTSVSTFISFLDL) and 57–77 (RLIILLILVGLSLVIIIVQFI).

Its subcellular location is the cell membrane. With respect to regulation, activated by a signal molecule generated by ThsB. Probable membrane protein component of the Thoeris antiviral defense system, composed of ThsA and ThsB. Expression of ThsA and ThsB in B.subtilis (strain BEST7003) confers resistance to phages SBSphiC, SBSphiJ and SPO1. Activation by a signal generated by ThsB leads to phage resistance. The sequence is that of Thoeris protein ThsA from Bacillus amyloliquefaciens (strain Y2) (Bacillus amyloliquefaciens subsp. plantarum (strain B9601-Y2)).